The sequence spans 209 residues: N-(5'-phosphoribosyl)anthranilate isomerase (209 aa).

The protein belongs to the TrpF family.

It catalyses the reaction N-(5-phospho-beta-D-ribosyl)anthranilate = 1-(2-carboxyphenylamino)-1-deoxy-D-ribulose 5-phosphate. Its pathway is amino-acid biosynthesis; L-tryptophan biosynthesis; L-tryptophan from chorismate: step 3/5. This Pyrobaculum islandicum (strain DSM 4184 / JCM 9189 / GEO3) protein is N-(5'-phosphoribosyl)anthranilate isomerase.